A 4660-amino-acid polypeptide reads, in one-letter code: Low-density lipoprotein receptor-related protein 2 (4660 aa).

The signal sequence occupies residues 1 to 25 (MERGAAAAAWMLLLAIAACLAPVSG). The Extracellular portion of the chain corresponds to 26–4425 (QECGSGNFRC…LSRGIPPGTT (4400 aa)). LDL-receptor class A domains follow at residues 27 to 63 (ECGS…IGCP), 66 to 104 (SCGS…QNCP), 107 to 143 (TCSS…RNCY), 146 to 180 (TCDQ…ANCT), 182 to 218 (LCSQ…HNCN), 221 to 257 (TCGG…DGCE), and 264 to 307 (TCYP…RYCG). 21 cysteine pairs are disulfide-bonded: Cys-28–Cys-40, Cys-35–Cys-53, Cys-47–Cys-62, Cys-67–Cys-80, Cys-74–Cys-93, Cys-87–Cys-103, Cys-108–Cys-120, Cys-115–Cys-133, Cys-127–Cys-142, Cys-147–Cys-157, Cys-152–Cys-170, Cys-164–Cys-179, Cys-183–Cys-195, Cys-190–Cys-208, Cys-202–Cys-217, Cys-222–Cys-234, Cys-229–Cys-247, Cys-241–Cys-256, Cys-265–Cys-278, Cys-272–Cys-291, and Cys-285–Cys-306. N-linked (GlcNAc...) asparagine glycosylation is found at Asn-159 and Asn-178. N-linked (GlcNAc...) asparagine glycosylation is found at Asn-299, Asn-340, Asn-387, and Asn-462. LDL-receptor class B repeat units follow at residues 435–477 (HRVF…DWIN), 478–520 (NKLY…DPTV), 521–567 (GYLF…DLVS), and 568–612 (KRVY…FEEH). The N-linked (GlcNAc...) asparagine glycan is linked to Asn-657. LDL-receptor class B repeat units lie at residues 752–794 (STIF…DWIS), 795–836 (RNLY…HPAA), 837–880 (GYMF…DWST), and 881–924 (SRLY…FKDN). Residue Asn-865 is glycosylated (N-linked (GlcNAc...) asparagine). Residues 1024–1060 (QCGSSSFPCNNGKCVPSIFRCDGVDDCHDNSDEHQCG) enclose the LDL-receptor class A 8 domain. Disulfide bonds link Cys-1025–Cys-1037, Cys-1032–Cys-1050, and Cys-1044–Cys-1059. Residue Asn-1063 is glycosylated (N-linked (GlcNAc...) asparagine). LDL-receptor class A domains follow at residues 1065–1102 (TCSS…QNCP), 1109–1145 (TCPP…KNCQ), 1149–1185 (TCHP…AGCV), 1187–1224 (NCTS…AGCP), 1230–1268 (MCHP…NGCV), 1271–1307 (TCSP…KDCP), and 1312–1350 (HCPS…PLCN). Cystine bridges form between Cys-1066–Cys-1079, Cys-1073–Cys-1092, Cys-1086–Cys-1101, Cys-1110–Cys-1122, Cys-1117–Cys-1135, Cys-1129–Cys-1144, Cys-1150–Cys-1162, Cys-1157–Cys-1175, and Cys-1169–Cys-1184. Ca(2+) is bound by residues Trp-1127, Asp-1130, Asp-1132, Asp-1134, Asp-1140, and Glu-1141. N-linked (GlcNAc...) asparagine glycosylation is present at Asn-1187. Cystine bridges form between Cys-1188-Cys-1201, Cys-1195-Cys-1214, Cys-1208-Cys-1223, Cys-1231-Cys-1244, Cys-1238-Cys-1257, Cys-1251-Cys-1267, Cys-1272-Cys-1284, Cys-1279-Cys-1297, Cys-1291-Cys-1306, Cys-1313-Cys-1326, Cys-1320-Cys-1339, Cys-1333-Cys-1349, Cys-1354-Cys-1365, Cys-1361-Cys-1374, Cys-1376-Cys-1389, Cys-1395-Cys-1405, Cys-1401-Cys-1414, and Cys-1416-Cys-1429. 6 residues coordinate Ca(2+): Tyr-1206, Asp-1209, Val-1211, Asp-1213, Asp-1219, and Glu-1220. Asn-1328 and Asn-1341 each carry an N-linked (GlcNAc...) asparagine glycan. The region spanning 1350–1390 (NQDSCLHFNGGCTHRCIQGPFGATCVCPIGYQLANDTKTCE) is the EGF-like 1 domain. Asn-1384 carries N-linked (GlcNAc...) asparagine glycosylation. The region spanning 1391-1430 (DVNECDIPGFCSQHCVNMRGSFRCACDPEYTLESDGRTCK) is the EGF-like 2; calcium-binding domain. 3 N-linked (GlcNAc...) asparagine glycosylation sites follow: Asn-1451, Asn-1497, and Asn-1551. 5 LDL-receptor class B repeats span residues 1479 to 1521 (GRVF…DWIG), 1522 to 1564 (RNIY…DPRM), 1567 to 1610 (NVMF…DYPN), 1611 to 1655 (RLIY…FEDS), and 1656 to 1696 (VFWT…IHPS). Asn-1676, Asn-1733, and Asn-1811 each carry an N-linked (GlcNAc...) asparagine glycan. 10 LDL-receptor class B repeats span residues 1791–1833 (QFIY…DWVS), 1834–1883 (RNIY…DPAR), 1884–1931 (GKLY…DIQE), 1932–1973 (QKLY…HGSF), 1974–2014 (LYYS…YHHR), 2108–2157 (GFIY…DWVA), 2158–2202 (GNLY…DPKH), 2203–2246 (RYLF…DHDT), 2247–2290 (GYIY…FGES), and 2291–2333 (IIWV…FDEH). N-linked (GlcNAc...) asparagine glycosylation is found at Asn-2131, Asn-2134, Asn-2178, and Asn-2225. N-linked (GlcNAc...) asparagine glycosylation occurs at Asn-2396. 5 LDL-receptor class B repeats span residues 2432-2478 (NRIF…DWIN), 2479-2519 (RRIY…DPCR), 2520-2563 (GYMY…DLET), 2564-2605 (DLLY…YGQY), and 2606-2647 (IYWT…VVKT). Residues Asn-2488 and Asn-2548 are each glycosylated (N-linked (GlcNAc...) asparagine). LDL-receptor class A domains lie at 2700 to 2738 (RCNQ…TVCA), 2741 to 2777 (TCRS…AGCL), 2780 to 2819 (SCNS…KNCP), 2822 to 2861 (TCQP…IYCA), 2864 to 2902 (TCRS…DTCG), 2907 to 2946 (SCSA…HHCE), 2949 to 2991 (NCSS…QNCT), 2994 to 3030 (ACST…RGCS), 3033 to 3071 (PCRD…HLCH), and 3076 to 3112 (TCPP…KGCG). Disulfide bonds link Cys-2701–Cys-2713, Cys-2708–Cys-2726, Cys-2720–Cys-2737, Cys-2742–Cys-2754, Cys-2749–Cys-2767, Cys-2761–Cys-2776, Cys-2781–Cys-2794, Cys-2789–Cys-2807, Cys-2801–Cys-2818, Cys-2823–Cys-2836, Cys-2830–Cys-2849, Cys-2843–Cys-2860, Cys-2865–Cys-2878, Cys-2872–Cys-2891, Cys-2885–Cys-2901, Cys-2908–Cys-2920, Cys-2915–Cys-2933, and Cys-2927–Cys-2945. Asn-2782 carries N-linked (GlcNAc...) asparagine glycosylation. N-linked (GlcNAc...) asparagine glycosylation is present at Asn-2810. Asn-2949 is a glycosylation site (N-linked (GlcNAc...) asparagine). 18 cysteine pairs are disulfide-bonded: Cys-2950–Cys-2967, Cys-2957–Cys-2980, Cys-2974–Cys-2990, Cys-2995–Cys-3007, Cys-3002–Cys-3020, Cys-3014–Cys-3029, Cys-3034–Cys-3046, Cys-3041–Cys-3059, Cys-3053–Cys-3070, Cys-3077–Cys-3089, Cys-3084–Cys-3102, Cys-3096–Cys-3111, Cys-3116–Cys-3128, Cys-3124–Cys-3137, Cys-3139–Cys-3152, Cys-3158–Cys-3169, Cys-3165–Cys-3178, and Cys-3180–Cys-3193. The N-linked (GlcNAc...) asparagine glycan is linked to Asn-2989. Residues 3112-3153 (GINECQDSSISHCDHNCTDTITSFYCSCLPGYKLMSDKRTCV) form the EGF-like 3 domain. An N-linked (GlcNAc...) asparagine glycan is attached at Asn-3127. The EGF-like 4; calcium-binding domain occupies 3154 to 3194 (DIDECKETPQLCSQKCENVIGSYICKCAPGYIREPDGKSCR). Residues Asn-3213, Asn-3259, Asn-3317, and Asn-3357 are each glycosylated (N-linked (GlcNAc...) asparagine). LDL-receptor class B repeat units lie at residues 3241–3283 (ERLY…DWVS), 3284–3326 (RKLY…ENPR), 3335–3378 (GYVY…DYTN), 3379–3421 (DLLY…FEDT), and 3422–3462 (VFWT…LHPY). Asn-3448 carries an N-linked (GlcNAc...) asparagine glycan. LDL-receptor class A domains are found at residues 3513 to 3551 (MCSS…DLCP), 3554 to 3592 (FCRL…VLCE), 3595 to 3633 (RCEA…SHCA), 3636 to 3674 (TCRP…HECM), 3679 to 3717 (NCDN…QGCE), 3720 to 3757 (PCHP…ESCV), 3760 to 3796 (ECTE…RDCE), and 3799 to 3835 (TCHP…SACP). Disulfide bonds link Cys-3514–Cys-3527, Cys-3521–Cys-3540, Cys-3534–Cys-3550, Cys-3555–Cys-3567, Cys-3562–Cys-3580, Cys-3574–Cys-3591, Cys-3596–Cys-3608, Cys-3603–Cys-3621, Cys-3615–Cys-3632, Cys-3637–Cys-3649, Cys-3644–Cys-3662, Cys-3656–Cys-3673, Cys-3680–Cys-3694, Cys-3688–Cys-3707, Cys-3701–Cys-3716, Cys-3721–Cys-3734, Cys-3729–Cys-3747, Cys-3741–Cys-3756, Cys-3761–Cys-3773, Cys-3768–Cys-3786, Cys-3780–Cys-3795, Cys-3800–Cys-3812, Cys-3807–Cys-3825, and Cys-3819–Cys-3834. Asn-3566 carries N-linked (GlcNAc...) asparagine glycosylation. N-linked (GlcNAc...) asparagine glycosylation is present at Asn-3682. A glycan (N-linked (GlcNAc...) asparagine) is linked at Asn-3840. LDL-receptor class A domains follow at residues 3843–3881 (YCPA…HLCF), 3884–3923 (PCES…EHCR), and 3929–3965 (PCTD…TGCN). Disulfide bonds link Cys-3844-Cys-3856, Cys-3851-Cys-3869, Cys-3863-Cys-3880, Cys-3885-Cys-3898, Cys-3893-Cys-3911, Cys-3905-Cys-3922, Cys-3930-Cys-3942, Cys-3937-Cys-3955, and Cys-3949-Cys-3964. N-linked (GlcNAc...) asparagine glycosylation is found at Asn-3969 and Asn-3980. The 42-residue stretch at 4009–4050 (DINECEEFGICPQSCRNSKGSYECFCVDGFKSMSTHYGERCA) folds into the EGF-like 5; calcium-binding domain. Intrachain disulfides connect Cys-4013–Cys-4023, Cys-4019–Cys-4032, and Cys-4034–Cys-4049. Residue Asn-4070 is glycosylated (N-linked (GlcNAc...) asparagine). LDL-receptor class B repeat units follow at residues 4156–4198 (RHIY…NPKL), 4199–4242 (GLMF…DYLN), and 4244–4285 (DRIY…FEDQ). A glycan (N-linked (GlcNAc...) asparagine) is linked at Asn-4329. The 35-residue stretch at 4379-4413 (MPSPCRCMHGGSCYFDENDLPKCKCSSGYSGEYCE) folds into the EGF-like 6 domain. 3 cysteine pairs are disulfide-bonded: Cys-4383-Cys-4391, Cys-4385-Cys-4401, and Cys-4403-Cys-4412. The chain crosses the membrane as a helical span at residues 4426–4446 (MALLLTFAMVIIVGALVLVGF). The Cytoplasmic segment spans residues 4447-4660 (FHYRKTGSLL…ANLVKEDSDV (214 aa)). An SH3-binding motif is present at residues 4454–4463 (SLLPSLPKLP). The PxLPxI/L motif 1; mediates interaction with ANKRA2 signature appears at 4457–4462 (PSLPKL). Residues 4460 to 4465 (PKLPSL) carry the PxLPxI/L motif 2; mediates interaction with ANKRA2 motif. Phosphoserine is present on residues Ser-4464 and Ser-4467. An Endocytosis signal motif is present at residues 4522 to 4527 (FENPMY). The interval 4558–4660 (QNYGRSIDPS…ANLVKEDSDV (103 aa)) is disordered. Phosphoserine is present on Ser-4577. An interaction with DAB2 region spans residues 4597 to 4610 (QTTNFENPIYAEMD). The short motif at 4603 to 4606 (NPIY) is the NPXY motif element. Residues 4606-4609 (YAEM) carry the SH2-binding motif. Positions 4619–4630 (VAPPPSPSLPAK) match the SH3-binding motif. Ser-4624 carries the post-translational modification Phosphoserine. The segment covering 4627 to 4636 (LPAKASKRSS) has biased composition (low complexity). Thr-4637 is subject to Phosphothreonine. A Phosphoserine modification is found at Ser-4658.

Belongs to the LDLR family. Binds plasminogen, extracellular matrix components, plasminogen activator-plasminogen activator inhibitor type I complex, apolipoprotein E-enriched beta-VLDL, lipoprotein lipase, lactoferrin, CLU/clusterin and calcium. Forms a multimeric complex together with LRPAP1. Interacts (via PxLPxI/L motif) with ANKRA2 (via ankyrin repeats). Interacts with LRP2BP. Interacts (via NPXY motif) with DAB2; the interaction is not affected by tyrosine phosphorylation of the NPXY motif. Interacts with MB. Interacts with BMP4. Interacts with the Sonic hedgehog protein N-product which is the active product of SHH. Interacts with CST3 in a calcium-dependent manner. Interacts with the vitamin-D binding protein GC/DBP. Interacts with sex hormone-binding protein SHBG. Interacts with angiotensin-2. Also interacts with angiotensin 1-7. Interacts with APOM. Interacts with selenoprotein SEPP1. Interacts with LEP. Interacts with ALB. Interacts with the antiapoptotic protein BIRC5/survivin. Interacts with matrix metalloproteinase MMP2 in complex with metalloproteinase inhibitor TIMP1. In neurons, forms a trimeric complex with APP and APPB1/FE65. Interacts with LDLRAP1/ARH; mediates trafficking of LRP2 to the endocytic recycling compartment. Does not interact with beta-amyloid protein 40 alone but interacts with the complex composed of beta-amyloid protein 40 and CLU/APOJ. Interacts with MDK. A fraction undergoes proteolytic cleavage of the extracellular domain at the cell membrane to generate a cytoplasmic tail fragment. This is internalized into the early endosome from where it trafficks in an LDLRAP1/ARH-dependent manner to the endocytic recycling compartment (ERC). In the ERC, it is further cleaved by gamma-secretase to release a fragment which translocates to the nucleus and mediates transcriptional repression. Post-translationally, N-glycosylation is required for ligand binding. Contains core-fucosylated N-glycans in kidney proximal convoluted tubules (PCTs) and hybrid-type N-glycans in proximal straight tubules (PSTs). Interacts with ligands in a glycoform-dependent manner. Retinol-binding protein and the vitamin D carrier GC/DBP are endocytosed primarily by PCTs, albumin is endocytosed equally by PCTs and PSTs, and the aminoglycoside kanamycin is endocytosed primarily by PSTs. In terms of tissue distribution, in the inner ear, strongly expressed in the marginal cells of the stria vascularis (at protein level). In the female reproductive tract, expressed on the luminal side of the uterine epithelium (at protein level). In the adult brain, expressed in ependymal cells of the lateral ventricles where expression is restricted to the ependyma that faces the stem cell niche (at protein level). Expressed in neurons throughout the brain including in the hippocampus, limbic cortices and cerebellum (at protein level). In the developing optic nerve, expressed exclusively in astrocytes at 14.5 dpc, 16.5 dpc and 18.5 dpc (at protein level).

The protein localises to the apical cell membrane. The protein resides in the endosome lumen. It localises to the membrane. It is found in the coated pit. Its subcellular location is the cell projection. The protein localises to the dendrite. The protein resides in the axon. Multiligand endocytic receptor. Acts together with CUBN to mediate endocytosis of high-density lipoproteins. Mediates receptor-mediated uptake of polybasic drugs such as aprotinin, aminoglycosides and polymyxin B. In the kidney, mediates the tubular uptake and clearance of leptin. Also mediates transport of leptin across the blood-brain barrier through endocytosis at the choroid plexus epithelium. Endocytosis of leptin in neuronal cells is required for hypothalamic leptin signaling and leptin-mediated regulation of feeding and body weight. Mediates endocytosis and subsequent lysosomal degradation of CST3 in kidney proximal tubule cells. Mediates renal uptake of 25-hydroxyvitamin D3 in complex with the vitamin D3 transporter GC/DBP. Mediates renal uptake of metallothionein-bound heavy metals. Together with CUBN, mediates renal reabsorption of myoglobin. Mediates renal uptake and subsequent lysosomal degradation of APOM. Plays a role in kidney selenium homeostasis by mediating renal endocytosis of selenoprotein SEPP1. Mediates renal uptake of the antiapoptotic protein BIRC5/survivin which may be important for functional integrity of the kidney. Mediates renal uptake of matrix metalloproteinase MMP2 in complex with metalloproteinase inhibitor TIMP1. Mediates endocytosis of Sonic hedgehog protein N-product (ShhN), the active product of SHH. Also mediates ShhN transcytosis. In the embryonic neuroepithelium, mediates endocytic uptake and degradation of BMP4, is required for correct SHH localization in the ventral neural tube and plays a role in patterning of the ventral telencephalon. Required at the onset of neurulation to sequester SHH on the apical surface of neuroepithelial cells of the rostral diencephalon ventral midline and to control PTCH1-dependent uptake and intracellular trafficking of SHH. During neurulation, required in neuroepithelial cells for uptake of folate bound to the folate receptor FOLR1 which is necessary for neural tube closure. In the adult brain, negatively regulates BMP signaling in the subependymal zone which enables neurogenesis to proceed. In astrocytes, mediates endocytosis of ALB which is required for the synthesis of the neurotrophic factor oleic acid. Involved in neurite branching. During optic nerve development, required for SHH-mediated migration and proliferation of oligodendrocyte precursor cells. Mediates endocytic uptake and clearance of SHH in the retinal margin which protects retinal progenitor cells from mitogenic stimuli and keeps them quiescent. Plays a role in reproductive organ development by mediating uptake in reproductive tissues of androgen and estrogen bound to the sex hormone binding protein SHBG. Mediates endocytosis of angiotensin-2. Also mediates endocytosis of angiotensin 1-7. Binds to the complex composed of beta-amyloid protein 40 and CLU/APOJ and mediates its endocytosis and lysosomal degradation. Required for embryonic heart development. Required for normal hearing, possibly through interaction with estrogen in the inner ear. The chain is Low-density lipoprotein receptor-related protein 2 (Lrp2) from Mus musculus (Mouse).